The primary structure comprises 122 residues: Large ribosomal subunit protein uL14 (122 aa).

This sequence belongs to the universal ribosomal protein uL14 family. Part of the 50S ribosomal subunit. Forms a cluster with proteins L3 and L19. In the 70S ribosome, L14 and L19 interact and together make contacts with the 16S rRNA in bridges B5 and B8.

In terms of biological role, binds to 23S rRNA. Forms part of two intersubunit bridges in the 70S ribosome. This chain is Large ribosomal subunit protein uL14, found in Chlorobaculum parvum (strain DSM 263 / NCIMB 8327) (Chlorobium vibrioforme subsp. thiosulfatophilum).